The following is a 250-amino-acid chain: Hydroxyacylglutathione hydrolase (250 aa).

Zn(2+) contacts are provided by His53, His55, Asp57, His58, His110, Asp127, and His165.

This sequence belongs to the metallo-beta-lactamase superfamily. Glyoxalase II family. As to quaternary structure, monomer. Zn(2+) is required as a cofactor.

The enzyme catalyses an S-(2-hydroxyacyl)glutathione + H2O = a 2-hydroxy carboxylate + glutathione + H(+). It functions in the pathway secondary metabolite metabolism; methylglyoxal degradation; (R)-lactate from methylglyoxal: step 2/2. Its function is as follows. Thiolesterase that catalyzes the hydrolysis of S-D-lactoyl-glutathione to form glutathione and D-lactic acid. The sequence is that of Hydroxyacylglutathione hydrolase from Photorhabdus laumondii subsp. laumondii (strain DSM 15139 / CIP 105565 / TT01) (Photorhabdus luminescens subsp. laumondii).